Reading from the N-terminus, the 100-residue chain is Nucleoid-associated protein HPSH_00175 (100 aa).

The protein belongs to the YbaB/EbfC family. In terms of assembly, homodimer.

It is found in the cytoplasm. The protein resides in the nucleoid. Its function is as follows. Binds to DNA and alters its conformation. May be involved in regulation of gene expression, nucleoid organization and DNA protection. The sequence is that of Nucleoid-associated protein HPSH_00175 from Helicobacter pylori (strain Shi470).